Here is a 189-residue protein sequence, read N- to C-terminus: Urease accessory protein UreF (189 aa).

This sequence belongs to the UreF family. In terms of assembly, ureD, UreF and UreG form a complex that acts as a GTP-hydrolysis-dependent molecular chaperone, activating the urease apoprotein by helping to assemble the nickel containing metallocenter of UreC. The UreE protein probably delivers the nickel.

The protein resides in the cytoplasm. In terms of biological role, required for maturation of urease via the functional incorporation of the urease nickel metallocenter. The polypeptide is Urease accessory protein UreF (Staphylococcus xylosus).